Reading from the N-terminus, the 201-residue chain is Large ribosomal subunit protein uL4 (201 aa).

The interval Ala-45–Gly-66 is disordered.

The protein belongs to the universal ribosomal protein uL4 family. As to quaternary structure, part of the 50S ribosomal subunit.

One of the primary rRNA binding proteins, this protein initially binds near the 5'-end of the 23S rRNA. It is important during the early stages of 50S assembly. It makes multiple contacts with different domains of the 23S rRNA in the assembled 50S subunit and ribosome. In terms of biological role, forms part of the polypeptide exit tunnel. This chain is Large ribosomal subunit protein uL4, found in Aeromonas salmonicida (strain A449).